The chain runs to 416 residues: Formyl-CoA:oxalate CoA-transferase (416 aa).

CoA-binding positions include 17 to 18 (QS), Arg38, 72 to 75 (LNTK), 96 to 98 (NFH), His104, and 137 to 140 (KAYE). Asp169 (nucleophile) is an active-site residue. Residue 248–250 (GGQ) participates in substrate binding. CoA is bound at residue 273–275 (QEQ).

Belongs to the CoA-transferase III family. Frc subfamily. In terms of assembly, homodimer.

It catalyses the reaction formyl-CoA + oxalate = oxalyl-CoA + formate. Its pathway is metabolic intermediate degradation; oxalate degradation; CO(2) and formate from oxalate: step 1/2. Involved in the catabolism of oxalate and in the adapatation to low pH via the induction of the oxalate-dependent acid tolerance response (ATR). Catalyzes the transfer of the CoA moiety from formyl-CoA to oxalate. This Escherichia coli (strain ATCC 8739 / DSM 1576 / NBRC 3972 / NCIMB 8545 / WDCM 00012 / Crooks) protein is Formyl-CoA:oxalate CoA-transferase.